Here is a 427-residue protein sequence, read N- to C-terminus: MAIQIFKVGLKDHSVLDPVLKRAREDLSSTLALVKPIVEDVKNRGDSALREYTQKFDEVIPPKSFVLEISKLNPKIDPKLKTALVKAAKNIRNFHKIQIPENKEIIIHGNKLGILHTPIESVSVYAPGGKALYPSTILMGVIPAKLAGVKNIQIVTPPRKGTLPDGLIAAAKIAGADRIVMAGGAQGIAAVSYGTESIPSSEFVVGPGNKFVTAAKVYLSGQGVIGIDSPAGPSEVLIIADDSADPMWVAADLLSQAEHGEDSVAILCTNSLSLAQKVKEEVEKALIERPKRGEMKRKSIEDHGKIFVFSNLEECFVFSNLFAPEHLEIQTKNFKKDLKKVKHAGSVFLGNYSPVAMGDYISGTNHILPTAGAARIYSSLGVSTFLKRVTWQEVSKKSIQNLYPHVKVLSEFEGLDEEHGNSVRIRR.

Residues Tyr125, Gln186, and Asn209 each coordinate NAD(+). Substrate is bound by residues Ser234, Gln256, and His259. Positions 256 and 259 each coordinate Zn(2+). Active-site proton acceptor residues include Glu325 and His326. Substrate contacts are provided by His326, Asp359, Glu413, and His419. Asp359 lines the Zn(2+) pocket. His419 serves as a coordination point for Zn(2+).

It belongs to the histidinol dehydrogenase family. The cofactor is Zn(2+).

The catalysed reaction is L-histidinol + 2 NAD(+) + H2O = L-histidine + 2 NADH + 3 H(+). It participates in amino-acid biosynthesis; L-histidine biosynthesis; L-histidine from 5-phospho-alpha-D-ribose 1-diphosphate: step 9/9. Its function is as follows. Catalyzes the sequential NAD-dependent oxidations of L-histidinol to L-histidinaldehyde and then to L-histidine. This Leptospira interrogans serogroup Icterohaemorrhagiae serovar copenhageni (strain Fiocruz L1-130) protein is Histidinol dehydrogenase.